Here is a 465-residue protein sequence, read N- to C-terminus: Midnolin (465 aa).

The Ubiquitin-like domain occupies 32–106 (MSLAIHSTTG…LTLVPTVEAG (75 aa)). 2 disordered regions span residues 185-262 (SVAT…SRKP) and 400-445 (RLRR…GLDF). Composition is skewed to low complexity over residues 195-219 (RPVSSAARVPPVSSSPSSPVSPSPV) and 240-257 (SPPASSSSTSTPGSSPTP). The required for nucleolar localization stretch occupies residues 397-424 (QQKRLRRKARRDARGPYHWTPSRKAGRS).

Interacts with GCK; the interaction occurs preferentially at low glucose levels. Interacts with the proteasome. In terms of tissue distribution, expressed at high levels in brain and liver with significantly lower levels in muscle.

The protein localises to the nucleus. The protein resides in the cytoplasm. Its subcellular location is the cytosol. It localises to the nucleolus. Facilitates the ubiquitin-independent proteasomal degradation of stimulus-induced transcription factors such as FOSB, EGR1, NR4A1, and IRF4 to the proteasome for degradation. Promotes also the degradation of other substrates such as CBX4. Plays a role in inhibiting the activity of glucokinase GCK and both glucose-induced and basal insulin secretion. This Mus musculus (Mouse) protein is Midnolin (Midn).